The following is a 176-amino-acid chain: Putative L,D-transpeptidase YqjB (176 aa).

Residues 1–25 (MRFFLCSIFMMISPIWPLGENPLPG) form the signal peptide. Positions 27–151 (PYVIVNKRTN…IPVGTRVLIT (125 aa)) constitute a L,D-TPase catalytic domain. Residue H111 is the Proton donor/acceptor of the active site. Catalysis depends on C127, which acts as the Nucleophile.

Belongs to the YkuD family.

Its pathway is cell wall biogenesis; peptidoglycan biosynthesis. This chain is Putative L,D-transpeptidase YqjB (yqjB), found in Bacillus subtilis (strain 168).